The primary structure comprises 402 residues: Dual-specificity RNA methyltransferase RlmN (402 aa).

The active-site Proton acceptor is the Glu-124. The Radical SAM core domain maps to 130–370 (DADRGTLCVS…APVRTPRGRD (241 aa)). Cys-137 and Cys-375 are disulfide-bonded. [4Fe-4S] cluster contacts are provided by Cys-144, Cys-148, and Cys-151. Residues 199–200 (GE), Ser-231, 253–255 (SLH), and Asn-332 each bind S-adenosyl-L-methionine. Cys-375 functions as the S-methylcysteine intermediate in the catalytic mechanism.

This sequence belongs to the radical SAM superfamily. RlmN family. Requires [4Fe-4S] cluster as cofactor.

The protein localises to the cytoplasm. It carries out the reaction adenosine(2503) in 23S rRNA + 2 reduced [2Fe-2S]-[ferredoxin] + 2 S-adenosyl-L-methionine = 2-methyladenosine(2503) in 23S rRNA + 5'-deoxyadenosine + L-methionine + 2 oxidized [2Fe-2S]-[ferredoxin] + S-adenosyl-L-homocysteine. It catalyses the reaction adenosine(37) in tRNA + 2 reduced [2Fe-2S]-[ferredoxin] + 2 S-adenosyl-L-methionine = 2-methyladenosine(37) in tRNA + 5'-deoxyadenosine + L-methionine + 2 oxidized [2Fe-2S]-[ferredoxin] + S-adenosyl-L-homocysteine. Its function is as follows. Specifically methylates position 2 of adenine 2503 in 23S rRNA and position 2 of adenine 37 in tRNAs. m2A2503 modification seems to play a crucial role in the proofreading step occurring at the peptidyl transferase center and thus would serve to optimize ribosomal fidelity. The polypeptide is Dual-specificity RNA methyltransferase RlmN (Rhizorhabdus wittichii (strain DSM 6014 / CCUG 31198 / JCM 15750 / NBRC 105917 / EY 4224 / RW1) (Sphingomonas wittichii)).